The following is a 331-amino-acid chain: 5-formaminoimidazole-4-carboxamide-1-(beta)-D-ribofuranosyl 5'-monophosphate synthetase (331 aa).

Residues histidine 9 and serine 69 each contribute to the 5-amino-1-(5-phospho-beta-D-ribosyl)imidazole-4-carboxamide site. The ATP-grasp domain maps to 76–322; the sequence is VELVEKMKVP…IAMELKQGLE (247 aa). ATP contacts are provided by residues 120–179 and glutamate 201; that span reads PDDI…VPVY. A 5-amino-1-(5-phospho-beta-D-ribosyl)imidazole-4-carboxamide-binding site is contributed by asparagine 229. The Mg(2+) site is built by glutamate 267 and glutamate 280.

The protein belongs to the phosphohexose mutase family. It depends on Mg(2+) as a cofactor. Mn(2+) serves as cofactor.

It carries out the reaction 5-amino-1-(5-phospho-beta-D-ribosyl)imidazole-4-carboxamide + formate + ATP = 5-formamido-1-(5-phospho-D-ribosyl)imidazole-4-carboxamide + ADP + phosphate. It participates in purine metabolism; IMP biosynthesis via de novo pathway; 5-formamido-1-(5-phospho-D-ribosyl)imidazole-4-carboxamide from 5-amino-1-(5-phospho-D-ribosyl)imidazole-4-carboxamide (formate route): step 1/1. Catalyzes the ATP- and formate-dependent formylation of 5-aminoimidazole-4-carboxamide-1-beta-d-ribofuranosyl 5'-monophosphate (AICAR) to 5-formaminoimidazole-4-carboxamide-1-beta-d-ribofuranosyl 5'-monophosphate (FAICAR) in the absence of folates. The chain is 5-formaminoimidazole-4-carboxamide-1-(beta)-D-ribofuranosyl 5'-monophosphate synthetase from Thermococcus kodakarensis (strain ATCC BAA-918 / JCM 12380 / KOD1) (Pyrococcus kodakaraensis (strain KOD1)).